Here is a 227-residue protein sequence, read N- to C-terminus: Staphylococcal superantigen-like 10 (227 aa).

The first 30 residues, 1 to 30, serve as a signal peptide directing secretion; that stretch reads MKFTALAKATLALGILTTGTLTTEVHSGHA.

Belongs to the staphylococcal/streptococcal toxin family. As to quaternary structure, interacts with prothrombin/F2 and coagulation factor X/F12. Interacts with human CXCR4.

The protein resides in the secreted. Plays a role in the inhibition of host complement activation via the classical pathway by interacting with the Fc region of human IgG and thereby interfering with the IgG/C1q interaction. Also inhibits the penultimate step of plasma clotting by interacting with prothrombin/F2 and coagulation factor X/F12. Does not affect the protease activity of thrombin but interferes with the conversion of prothrombin to thrombin. Interacts with human receptor CXCR4 and specifically inhibits CXCL12-induced calcium mobilization and cell migration. The chain is Staphylococcal superantigen-like 10 from Staphylococcus aureus (strain NCTC 8325 / PS 47).